The sequence spans 427 residues: Gamma-glutamyl phosphate reductase (427 aa).

It belongs to the gamma-glutamyl phosphate reductase family.

The protein localises to the cytoplasm. It carries out the reaction L-glutamate 5-semialdehyde + phosphate + NADP(+) = L-glutamyl 5-phosphate + NADPH + H(+). It participates in amino-acid biosynthesis; L-proline biosynthesis; L-glutamate 5-semialdehyde from L-glutamate: step 2/2. Functionally, catalyzes the NADPH-dependent reduction of L-glutamate 5-phosphate into L-glutamate 5-semialdehyde and phosphate. The product spontaneously undergoes cyclization to form 1-pyrroline-5-carboxylate. This Streptomyces griseus subsp. griseus (strain JCM 4626 / CBS 651.72 / NBRC 13350 / KCC S-0626 / ISP 5235) protein is Gamma-glutamyl phosphate reductase.